The primary structure comprises 488 residues: Envelope glycoprotein gp62 (488 aa).

Positions Met-1–Gly-20 are cleaved as a signal peptide. Residues Asp-21–Ala-442 lie on the Extracellular side of the membrane. Asn-140 and Asn-222 each carry an N-linked (GlcNAc...) asparagine; by host glycan. The CXXC motif lies at Cys-225–Cys-228. Intrachain disulfides connect Cys-225–Cys-228, Cys-225–Cys-401, and Cys-393–Cys-400. N-linked (GlcNAc...) asparagine; by host glycans are attached at residues Asn-244 and Asn-272. The fusion peptide stretch occupies residues Ala-313–Arg-333. Coiled-coil stretches lie at residues Ala-341–Trp-387 and Gln-397–Leu-429. An immunosuppression region spans residues Ala-376–Leu-392. Positions Cys-393–Cys-401 match the CX6CC motif. An N-linked (GlcNAc...) asparagine; by host glycan is attached at Asn-404. A helical transmembrane segment spans residues Leu-443–Ile-463. Cys-462 carries S-palmitoyl cysteine; by host lipidation. Residues Leu-464–Leu-488 are Cytoplasmic-facing.

As to quaternary structure, the mature envelope protein (Env) consists of a trimer of SU-TM heterodimers attached by a labile interchain disulfide bond. Post-translationally, specific enzymatic cleavages in vivo yield mature proteins. Envelope glycoproteins are synthesized as an inactive precursor that is N-glycosylated and processed likely by host cell furin or by a furin-like protease in the Golgi to yield the mature SU and TM proteins. The cleavage site between SU and TM requires the minimal sequence [KR]-X-[KR]-R. In terms of processing, the CXXC motif is highly conserved across a broad range of retroviral envelope proteins. It is thought to participate in the formation of a labile disulfide bond possibly with the CX6CC motif present in the transmembrane protein. Isomerization of the intersubunit disulfide bond to an SU intrachain disulfide bond is thought to occur upon receptor recognition in order to allow membrane fusion. The transmembrane protein is palmitoylated.

It localises to the virion membrane. The protein localises to the host cell membrane. In terms of biological role, the surface protein (SU) attaches the virus to the host cell by binding to its receptor. This interaction triggers the refolding of the transmembrane protein (TM) and is thought to activate its fusogenic potential by unmasking its fusion peptide. Fusion occurs at the host cell plasma membrane. The transmembrane protein (TM) acts as a class I viral fusion protein. Under the current model, the protein has at least 3 conformational states: pre-fusion native state, pre-hairpin intermediate state, and post-fusion hairpin state. During viral and target cell membrane fusion, the coiled coil regions (heptad repeats) assume a trimer-of-hairpins structure, positioning the fusion peptide in close proximity to the C-terminal region of the ectodomain. The formation of this structure appears to drive apposition and subsequent fusion of viral and target cell membranes. Membranes fusion leads to delivery of the nucleocapsid into the cytoplasm. The polypeptide is Envelope glycoprotein gp62 (env) (Homo sapiens (Human)).